Consider the following 159-residue polypeptide: Transcriptional repressor NrdR (159 aa).

The segment at 3-34 is a zinc-finger region; sequence CPFCGSDNTSVKDSRAAEDDTAVRRRRVCESC. One can recognise an ATP-cone domain in the interval 49–139; the sequence is IIVVKRDGKR…VYRDFKDPSD (91 aa).

Belongs to the NrdR family. The cofactor is Zn(2+).

Negatively regulates transcription of bacterial ribonucleotide reductase nrd genes and operons by binding to NrdR-boxes. The polypeptide is Transcriptional repressor NrdR (Hyphomonas neptunium (strain ATCC 15444)).